A 523-amino-acid chain; its full sequence is NEDD8-activating enzyme E1 regulatory subunit AXL (523 aa).

The protein belongs to the ubiquitin-activating E1 family. ULA1 subfamily. As to quaternary structure, heterodimer of ECR1 and AXL1. The complex binds to RUB1/NEDD8 and RCE1.

It localises to the nucleus. Its pathway is protein modification; protein neddylation. Functionally, regulatory subunit of the dimeric ECR1-AXL1 E1 enzyme. E1 activates RUB1/NEDD8 by first adenylating its C-terminal glycine residue with ATP, thereafter linking this residue to the side chain of the catalytic cysteine, yielding a RUB1-ECR1 thioester and free AMP. E1 finally transfers RUB1 to the catalytic cysteine of RCE1. May function redundantly with AXR1 in the RUB conjugating pathway. Seems not to be functionally equivalent to AXR1 in vivo. The protein is NEDD8-activating enzyme E1 regulatory subunit AXL of Arabidopsis thaliana (Mouse-ear cress).